A 518-amino-acid polypeptide reads, in one-letter code: U-box domain-containing protein 57 (518 aa).

Residues 86–142 (EEVRKVHILEEEIVTLKHQADTYLVQKEKAVTAYDQLKHERDNAVQQVNELRDQSTH) are a coiled coil. The Protein kinase domain occupies 159-409 (FKNAREVGDT…RPDLLNEVWI (251 aa)). Residues 434-508 (SVPAAFICPI…HGYLQQQQPN (75 aa)) form the U-box domain.

The enzyme catalyses S-ubiquitinyl-[E2 ubiquitin-conjugating enzyme]-L-cysteine + [acceptor protein]-L-lysine = [E2 ubiquitin-conjugating enzyme]-L-cysteine + N(6)-ubiquitinyl-[acceptor protein]-L-lysine.. It functions in the pathway protein modification; protein ubiquitination. Possesses E3 ubiquitin-protein ligase in vitro. May be involved in cell death signaling. In Oryza sativa subsp. japonica (Rice), this protein is U-box domain-containing protein 57 (PUB57).